The following is a 311-amino-acid chain: uncharacterized protein (311 aa).

This is an uncharacterized protein from Mycoplasma genitalium (strain ATCC 33530 / DSM 19775 / NCTC 10195 / G37) (Mycoplasmoides genitalium).